A 64-amino-acid chain; its full sequence is Large ribosomal subunit protein uL1 (64 aa).

The protein belongs to the universal ribosomal protein uL1 family. As to quaternary structure, part of the 50S ribosomal subunit.

Binds directly to 23S rRNA. The L1 stalk is quite mobile in the ribosome, and is involved in E site tRNA release. Functionally, protein L1 is also a translational repressor protein, it controls the translation of the L11 operon by binding to its mRNA. This Streptomyces lavendulae protein is Large ribosomal subunit protein uL1 (rplA).